The primary structure comprises 163 residues: COP9 signalosome complex subunit 9 (163 aa).

Residues glutamate 5 to arginine 120 form the PCI domain.

As to quaternary structure, component of a COP9 signalosome-like (CSN) complex.

The protein localises to the cytoplasm. It localises to the nucleus. In terms of biological role, component of the COP9 signalosome (CSN) complex that acts as a regulator of the ubiquitin (Ubl) conjugation pathway by mediating the deneddylation of the cullin subunit of SCF-type E3 ubiquitin-protein ligase complexes. The complex is involved in the regulation of the mating pheromone response. The sequence is that of COP9 signalosome complex subunit 9 (CSN9) from Eremothecium gossypii (strain ATCC 10895 / CBS 109.51 / FGSC 9923 / NRRL Y-1056) (Yeast).